The following is a 130-amino-acid chain: Small ribosomal subunit protein uS9 (130 aa).

Positions 105-130 are disordered; the sequence is TRDSRMVERKKPGLKKARRASQFSKR. A compositionally biased stretch (basic and acidic residues) spans 106–115; that stretch reads RDSRMVERKK. A compositionally biased stretch (basic residues) spans 116-130; the sequence is PGLKKARRASQFSKR.

This sequence belongs to the universal ribosomal protein uS9 family.

In Oenococcus oeni (strain ATCC BAA-331 / PSU-1), this protein is Small ribosomal subunit protein uS9.